Here is a 236-residue protein sequence, read N- to C-terminus: Large ribosomal subunit protein uL1 (236 aa).

Belongs to the universal ribosomal protein uL1 family. Part of the 50S ribosomal subunit.

Binds directly to 23S rRNA. The L1 stalk is quite mobile in the ribosome, and is involved in E site tRNA release. Its function is as follows. Protein L1 is also a translational repressor protein, it controls the translation of the L11 operon by binding to its mRNA. The protein is Large ribosomal subunit protein uL1 of Acidobacterium capsulatum (strain ATCC 51196 / DSM 11244 / BCRC 80197 / JCM 7670 / NBRC 15755 / NCIMB 13165 / 161).